Consider the following 119-residue polypeptide: Basic phospholipase A2 taipoxin alpha chain (119 aa).

7 cysteine pairs are disulfide-bonded: cysteine 11–cysteine 72, cysteine 27–cysteine 118, cysteine 29–cysteine 45, cysteine 44–cysteine 99, cysteine 51–cysteine 92, cysteine 61–cysteine 85, and cysteine 79–cysteine 90. Residues tyrosine 28, glycine 30, and glycine 32 each contribute to the Ca(2+) site. Residue histidine 48 is part of the active site. Aspartate 49 contributes to the Ca(2+) binding site. Residue aspartate 93 is part of the active site.

It belongs to the phospholipase A2 family. Group I subfamily. D49 sub-subfamily. Heterotrimer of alpha, beta, and gamma chains; non-covalently linked. Ca(2+) is required as a cofactor. As to expression, expressed by the venom gland.

Its subcellular location is the secreted. It catalyses the reaction a 1,2-diacyl-sn-glycero-3-phosphocholine + H2O = a 1-acyl-sn-glycero-3-phosphocholine + a fatty acid + H(+). Functionally, heterotrimer: Snake venom phospholipase A2 (PLA2) heterotrimer that acts as a potent presynaptic neurotoxin by blocking synaptic transmission and synaptic vesicle recycling. May act by binding in a calcium-dependent fashion to neurotonal pentraxin-1 (NPTX1) and neurotonal pentraxin-2 (NPTX2), but not to neuronal pentraxin receptor (NPTXR). Also binds to taipoxin-associated calcium binding protein 49 (RCN2), a protein localized in the lumen of endoplasmic reticulum. Monomer (alpha chain): Snake venom phospholipase A2 (PLA2) alpha chain that possesses the same high enzymatic activity as the heterotrimer. PLA2 catalyzes the calcium-dependent hydrolysis of the 2-acyl groups in 3-sn-phosphoglycerides. This chain is Basic phospholipase A2 taipoxin alpha chain, found in Oxyuranus scutellatus scutellatus (Australian taipan).